A 171-amino-acid polypeptide reads, in one-letter code: MYRKALLVWLLVYGIMRCTVHSSPTALKYPALRLEDEVYDEDGNTLPDFAFDNNPIGIGNPASVFDDMYSFYYPAEKRHADDLLNKAYRNLLGQLSARKYLHTLMAKHLGAVSSSLEDDSEPLSKRHSDGIFTDSYSRYRKQMAVKKYLAAVLGKRYKQRIKNKGRRVAYL.

The signal sequence occupies residues 1–22; sequence MYRKALLVWLLVYGIMRCTVHS. A propeptide spanning residues 23–76 is cleaved from the precursor; sequence SPTALKYPALRLEDEVYDEDGNTLPDFAFDNNPIGIGNPASVFDDMYSFYYPAE. The important for receptor binding stretch occupies residues 145–153; that stretch reads VKKYLAAVL. Lys-164 is modified (lysine amide). A propeptide spanning residues 168–171 is cleaved from the precursor; sequence VAYL.

The protein belongs to the glucagon family.

The protein resides in the secreted. Its function is as follows. Primary role of GRF is to release GH from the pituitary. PACAP is a neuropeptide involved in diverse array of physiological processes through activating the PACAP subfamily of class B1 G protein-coupled receptors: VIP receptor 1 (VIPR1), VIP receptor 2 (VIPR2), and PACAP type I receptor (ADCYAP1R1). Exerts neuroprotective and general cytoprotective effects due to anti-apoptotic, anti-inflammatory, and antioxidant actions. This Pelophylax ridibundus (Marsh frog) protein is Glucagon family neuropeptides (adcyap1).